Here is a 323-residue protein sequence, read N- to C-terminus: 1D-myo-inositol 2-acetamido-2-deoxy-alpha-D-glucopyranoside deacetylase (323 aa).

His-28, Asp-31, and His-163 together coordinate Zn(2+).

This sequence belongs to the MshB deacetylase family. Zn(2+) is required as a cofactor.

It catalyses the reaction 1D-myo-inositol 2-acetamido-2-deoxy-alpha-D-glucopyranoside + H2O = 1D-myo-inositol 2-amino-2-deoxy-alpha-D-glucopyranoside + acetate. Functionally, catalyzes the deacetylation of 1D-myo-inositol 2-acetamido-2-deoxy-alpha-D-glucopyranoside (GlcNAc-Ins) in the mycothiol biosynthesis pathway. The polypeptide is 1D-myo-inositol 2-acetamido-2-deoxy-alpha-D-glucopyranoside deacetylase (Streptomyces scabiei (strain 87.22)).